Here is a 321-residue protein sequence, read N- to C-terminus: Genome polyprotein (321 aa).

Over 1–52 (RNLGKVIDTLTCGFADLMGYIPLVGAPLGGAARALAHGVRVLEDGVNYATGN) the chain is Cytoplasmic. Residues 6 to 57 (VIDTLTCGFADLMGYIPLVGAPLGGAARALAHGVRVLEDGVNYATGNLPGCS) are interaction with APOA2. Residues 48-51 (YATG) form an important for lipid droplets localization region. The chain crosses the membrane as a helical span at residues 53–73 (LPGCSFSIFLLALLSCLTVPA). Residues 62–75 (LLALLSCLTVPASA) constitute a propeptide, ER anchor for the core protein, removed in mature form by host signal peptidase. At 74–242 (SAHQVRNSTG…AGAHWGVLAG (169 aa)) the chain is on the lumenal side. N-linked (GlcNAc...) asparagine; by host glycosylation is found at asparagine 80, asparagine 93, and asparagine 118. An important for fusion region spans residues 149–180 (LVGSATLCSALYVGDLCGSVFLVGQLFTFSPR). Asparagine 189 carries an N-linked (GlcNAc...) asparagine; by host glycan. Residues 243 to 263 (IAYFSMVGNWAKVLVVLLLFA) traverse the membrane as a helical segment. Over 264 to 321 (GVDAETYTSGGNAGHTMTGIVRFFAPGPKQNVHLINTNGSWHINSTALNCNDSLNTGW) the chain is Lumenal. The tract at residues 268-294 (ETYTSGGNAGHTMTGIVRFFAPGPKQN) is HVR1. N-linked (GlcNAc...) (high mannose) asparagine; by host glycosylation is found at asparagine 301, asparagine 307, and asparagine 314.

This sequence belongs to the hepacivirus polyprotein family. As to quaternary structure, homooligomer. Interacts with E1 (via C-terminus). Interacts with the non-structural protein 5A. Interacts (via N-terminus) with host STAT1 (via SH2 domain); this interaction results in decreased STAT1 phosphorylation and ubiquitin-mediated proteasome-dependent STAT1 degradation, leading to decreased IFN-stimulated gene transcription. Interacts with host STAT3; this interaction constitutively activates STAT3. Interacts with host LTBR receptor. Interacts with host TNFRSF1A receptor and possibly induces apoptosis. Interacts with host HNRPK. Interacts with host YWHAE. Interacts with host UBE3A/E6AP. Interacts with host DDX3X. Interacts with host APOA2. Interacts with host RXRA protein. Interacts with host SP110 isoform 3/Sp110b; this interaction sequesters the transcriptional corepressor SP110 away from the nucleus. Interacts with host CREB3 nuclear transcription protein; this interaction triggers cell transformation. Interacts with host ACY3. Interacts with host C1QR1. Interacts with host RBM24; this interaction, which enhances the interaction of the mature core protein with 5'-UTR, may inhibit viral translation and favor replication. Interacts with host EIF2AK2/PKR; this interaction induces the autophosphorylation of EIF2AK2. Part of the viral assembly initiation complex composed of NS2, E1, E2, NS3, NS4A, NS5A and the mature core protein. Forms a heterodimer with envelope glycoprotein E2. Interacts with mature core protein. Interacts with protease NS2. The heterodimer E1/E2 interacts with host CLDN1; this interaction plays a role in viral entry into host cell. Interacts with host SPSB2 (via C-terminus). Part of the viral assembly initiation complex composed of NS2, E1, E2, NS3, NS4A, NS5A and the mature core protein. In terms of assembly, forms a heterodimer with envelope glycoprotein E1. Interacts with host CD81 and SCARB1 receptors; these interactions play a role in viral entry into host cell. Interacts with host EIF2AK2/PKR; this interaction inhibits EIF2AK2 and probably allows the virus to evade the innate immune response. Interacts with host CD209/DC-SIGN and CLEC4M/DC-SIGNR. Interact with host SPCS1; this interaction is essential for viral particle assembly. Interacts with protease NS2. The heterodimer E1/E2 interacts with host CLDN1; this interaction plays a role in viral entry into host cell. Part of the viral assembly initiation complex composed of NS2, E1, E2, NS3, NS4A, NS5A and the mature core protein. Post-translationally, specific enzymatic cleavages in vivo yield mature proteins. The structural proteins, core, E1, E2 and p7 are produced by proteolytic processing by host signal peptidases. The core protein precursor is synthesized as a 23 kDa, which is retained in the ER membrane through the hydrophobic signal peptide. Cleavage by the signal peptidase releases the 21 kDa mature core protein. The cleavage of the core protein precursor occurs between aminoacids 176 and 188 but the exact cleavage site is not known. Some degraded forms of the core protein appear as well during the course of infection. The other proteins (p7, NS2, NS3, NS4A, NS4B, NS5A and NS5B) are cleaved by the viral proteases. Autoprocessing between NS2 and NS3 is mediated by the NS2 cysteine protease catalytic domain and regulated by the NS3 N-terminal domain. Phosphorylated by host PKC and PKA. In terms of processing, ubiquitinated; mediated by UBE3A and leading to core protein subsequent proteasomal degradation. Post-translationally, highly N-glycosylated.

It localises to the host endoplasmic reticulum membrane. Its subcellular location is the host mitochondrion membrane. It is found in the virion. The protein localises to the host cytoplasm. The protein resides in the host nucleus. It localises to the host lipid droplet. Its subcellular location is the virion membrane. In terms of biological role, packages viral RNA to form a viral nucleocapsid, and promotes virion budding. Participates in the viral particle production as a result of its interaction with the non-structural protein 5A. Binds RNA and may function as a RNA chaperone to induce the RNA structural rearrangements taking place during virus replication. Modulates viral translation initiation by interacting with viral IRES and 40S ribosomal subunit. Affects various cell signaling pathways, host immunity and lipid metabolism. Prevents the establishment of cellular antiviral state by blocking the interferon-alpha/beta (IFN-alpha/beta) and IFN-gamma signaling pathways and by blocking the formation of phosphorylated STAT1 and promoting ubiquitin-mediated proteasome-dependent degradation of STAT1. Activates STAT3 leading to cellular transformation. Regulates the activity of cellular genes, including c-myc and c-fos. May repress the promoter of p53, and sequester CREB3 and SP110 isoform 3/Sp110b in the cytoplasm. Represses cell cycle negative regulating factor CDKN1A, thereby interrupting an important check point of normal cell cycle regulation. Targets transcription factors involved in the regulation of inflammatory responses and in the immune response: suppresses TNF-induced NF-kappa-B activation, and activates AP-1. Binds to dendritic cells (DCs) via C1QR1, resulting in down-regulation of T-lymphocytes proliferation. Alters lipid metabolism by interacting with hepatocellular proteins involved in lipid accumulation and storage. Induces up-regulation of FAS promoter activity, and thereby contributes to the increased triglyceride accumulation in hepatocytes (steatosis). Functionally, forms a heterodimer with envelope glycoprotein E2, which mediates virus attachment to the host cell, virion internalization through clathrin-dependent endocytosis and fusion with host membrane. Fusion with the host cell is most likely mediated by both E1 and E2, through conformational rearrangements of the heterodimer required for fusion rather than a classical class II fusion mechanism. E1/E2 heterodimer binds host apolipoproteins such as APOB and ApoE thereby forming a lipo-viro-particle (LVP). APOE associated to the LVP allows the initial virus attachment to cell surface receptors such as the heparan sulfate proteoglycans (HSPGs), syndecan-1 (SDC1), syndecan-1 (SDC2), the low-density lipoprotein receptor (LDLR) and scavenger receptor class B type I (SCARB1). The cholesterol transfer activity of SCARB1 allows E2 exposure and binding of E2 to SCARB1 and the tetraspanin CD81. E1/E2 heterodimer binding on CD81 activates the epithelial growth factor receptor (EGFR) signaling pathway. Diffusion of the complex E1-E2-EGFR-SCARB1-CD81 to the cell lateral membrane allows further interaction with Claudin 1 (CLDN1) and occludin (OCLN) to finally trigger HCV entry. Forms a heterodimer with envelope glycoprotein E1, which mediates virus attachment to the host cell, virion internalization through clathrin-dependent endocytosis and fusion with host membrane. Fusion with the host cell is most likely mediated by both E1 and E2, through conformational rearrangements of the heterodimer required for fusion rather than a classical class II fusion mechanism. The interaction between envelope glycoprotein E2 and host apolipoprotein E/APOE allows the proper assembly, maturation and infectivity of the viral particles. This interaction is probably promoted via the up-regulation of cellular autophagy by the virus. E1/E2 heterodimer binds host apolipoproteins such as APOB and APOE thereby forming a lipo-viro-particle (LVP). APOE associated to the LVP allows the initial virus attachment to cell surface receptors such as the heparan sulfate proteoglycans (HSPGs), syndecan-1 (SDC1), syndecan-1 (SDC2), the low-density lipoprotein receptor (LDLR) and scavenger receptor class B type I (SCARB1). The cholesterol transfer activity of SCARB1 allows E2 exposure and binding of E2 to SCARB1 and the tetraspanin CD81. E1/E2 heterodimer binding on CD81 activates the epithelial growth factor receptor (EGFR) signaling pathway. Diffusion of the complex E1-E2-EGFR-SCARB1-CD81 to the cell lateral membrane allows further interaction with Claudin 1 (CLDN1) and occludin (OCLN) to finally trigger HCV entry. Inhibits host EIF2AK2/PKR activation, preventing the establishment of an antiviral state. Viral ligand for CD209/DC-SIGN and CLEC4M/DC-SIGNR, which are respectively found on dendritic cells (DCs), and on liver sinusoidal endothelial cells and macrophage-like cells of lymph node sinuses. These interactions allow the capture of circulating HCV particles by these cells and subsequent facilitated transmission to permissive cells such as hepatocytes and lymphocyte subpopulations. This chain is Genome polyprotein, found in Hepatitis C virus (isolate HCT18) (HCV).